The sequence spans 333 residues: MLGIWTLLPLVLTSVVRLLSKCVNAQVTDISSKGFELRKIVTTIETQNLEGLHHEGQFCRNPCPPGERKARDCTVNEDEPDCVPCQEGEEYTDKGHFSSKCRRCRLCDEGHGLEVEINCTRTQNTKCRCKPNFFCNSAVCEHCDPCTKCKHGIIEECTLTSNTKCKEEDSRSDLLWLCLLLLLLLIPPIVYVVIKEPCRKRRKENQGPHESTTLNPETAINLSDVDLSKYITTIAGAMTLSQVKDFVRKNGVSEAKIDEIKNDNVQDTAEQKVQLLRNWYQLHGKKDACDTLIKGLKTADLCTLAEKIHAVILKDITSDTENSNFGNEVQNLV.

The N-terminal stretch at 1 to 25 (MLGIWTLLPLVLTSVVRLLSKCVNA) is a signal peptide. Over 26-173 (QVTDISSKGF…KCKEEDSRSD (148 aa)) the chain is Extracellular. TNFR-Cys repeat units lie at residues 47 to 83 (QNLE…PDCV), 84 to 127 (PCQE…NTKC), and 128 to 166 (RCKP…TKCK). Intrachain disulfides connect Cys59-Cys73, Cys63-Cys82, Cys85-Cys101, Cys104-Cys119, Cys107-Cys127, Cys129-Cys143, Cys146-Cys157, and Cys149-Cys165. N-linked (GlcNAc...) asparagine glycosylation occurs at Asn118. Residues 174-194 (LLWLCLLLLLLLIPPIVYVVI) form a helical membrane-spanning segment. Topologically, residues 195-333 (KEPCRKRRKE…NFGNEVQNLV (139 aa)) are cytoplasmic. Cys198 carries S-palmitoyl cysteine lipidation. The tract at residues 211-315 (STTLNPETAI…EKIHAVILKD (105 aa)) is interaction with HIPK3. Phosphothreonine is present on Thr213. Ser223 carries the post-translational modification Phosphoserine. An interaction with CALM region spans residues 228 to 252 (SKYITTIAGAMTLSQVKDFVRKNGV). A Death domain is found at 228-312 (SKYITTIAGA…TLAEKIHAVI (85 aa)). Position 320 is a phosphothreonine (Thr320).

As to quaternary structure, component of the death-induced signaling complex (DISC) composed of cell surface receptor FAS/CD95, adapter protein FADD and the CASP8 protease; recruitment of CASP8 to the complex is required for processing of CASP8 into the p18 and p10 subunits. Interacts directly (via DED domain) with NOL3 (via CARD domain); inhibits death-inducing signaling complex (DISC) assembly by inhibiting the increase in FAS-FADD binding induced by FAS activation. Binds DAXX. Interacts with HIPK3. Part of a complex containing HIPK3 and FADD. Binds RIPK1 and FAIM2. Interacts with BABAM2 and FEM1B. Interacts with CALM. In the absence of stimulation, interacts with BIRC2, DDX3X and GSK3B. The interaction with BIRC2 and DDX3X is further enhanced upon receptor stimulation and accompanied by DDX3X and BIRC2 cleavage. In terms of processing, palmitoylated. Palmitoylation by ZDHHC7 prevents the lysosomal degradation of FAS regulating its expression at the plasma membrane.

Its subcellular location is the cell membrane. The protein resides in the membrane raft. Its function is as follows. Receptor for TNFSF6/FASLG. The adapter molecule FADD recruits caspase CASP8 to the activated receptor. The resulting death-inducing signaling complex (DISC) performs CASP8 proteolytic activation which initiates the subsequent cascade of caspases (aspartate-specific cysteine proteases) mediating apoptosis. FAS-mediated apoptosis may have a role in the induction of peripheral tolerance, in the antigen-stimulated suicide of mature T-cells, or both. This Macaca mulatta (Rhesus macaque) protein is Tumor necrosis factor receptor superfamily member 6 (FAS).